An 808-amino-acid chain; its full sequence is Tegument protein UL47 homolog (808 aa).

Disordered stretches follow at residues 1–21 and 77–266; these read MQMP…RENQ and PNEE…SFGE. Positions 83–92 are enriched in basic and acidic residues; it reads DNSRGRDRTR. Over residues 133 to 160 the composition is skewed to basic residues; that stretch reads SRARSRRRSSSRRRHRNASMHMHFRGGS. Residues 162–171 are compositionally biased toward polar residues; sequence RSATGSQNLI. Residues 197 to 214 show a composition bias toward basic residues; that stretch reads RSSRVRRRHRRSSRRRGP. Positions 235–259 are enriched in basic and acidic residues; that stretch reads PISDIDQKRLRKNSDTSSRGTRESP.

It belongs to the alphaherpesvirinae HHV-1 UL47 family. Interacts with US3 kinase. Interacts with UL31 and UL34; these interactions seem important for efficient virion nuclear egress. Interacts with UL41/VHS. Post-translationally, phosphorylated by US3. This phosphorylation is required for proper nuclear localization. In terms of processing, O-glycosylated.

The protein localises to the virion tegument. Its subcellular location is the host nucleus. It is found in the host cytoplasm. Its function is as follows. Tegument protein that can bind to various RNA transcripts. Plays a role in the attenuation of selective viral and cellular mRNA degradation by modulating the activity of host shutoff RNase UL41/VHS. Also plays a role in the primary envelopment of virions in the perinuclear space, probably by interacting with two nuclear egress proteins UL31 and UL34. Plays an important role in the splicing of glycoprotein/gC transcripts and thereby participates in bird-to-bird viral transmission. In Gallus gallus (Chicken), this protein is Tegument protein UL47 homolog (MDV060).